A 180-amino-acid chain; its full sequence is ATP synthase subunit b, chloroplastic (180 aa).

The chain crosses the membrane as a helical span at residues 28–48 (VTTLINIGVVLCLLIIFGKGF).

It belongs to the ATPase B chain family. As to quaternary structure, F-type ATPases have 2 components, F(1) - the catalytic core - and F(0) - the membrane proton channel. F(1) has five subunits: alpha(3), beta(3), gamma(1), delta(1), epsilon(1). F(0) has four main subunits: a(1), b(1), b'(1) and c(10-14). The alpha and beta chains form an alternating ring which encloses part of the gamma chain. F(1) is attached to F(0) by a central stalk formed by the gamma and epsilon chains, while a peripheral stalk is formed by the delta, b and b' chains.

It localises to the plastid. It is found in the chloroplast thylakoid membrane. F(1)F(0) ATP synthase produces ATP from ADP in the presence of a proton or sodium gradient. F-type ATPases consist of two structural domains, F(1) containing the extramembraneous catalytic core and F(0) containing the membrane proton channel, linked together by a central stalk and a peripheral stalk. During catalysis, ATP synthesis in the catalytic domain of F(1) is coupled via a rotary mechanism of the central stalk subunits to proton translocation. Functionally, component of the F(0) channel, it forms part of the peripheral stalk, linking F(1) to F(0). This chain is ATP synthase subunit b, chloroplastic, found in Cuscuta obtusiflora (Peruvian dodder).